The sequence spans 360 residues: Isocitrate dehydrogenase [NAD] regulatory subunit B, mitochondrial (360 aa).

The N-terminal 113 residues, 1–113, are a transit peptide targeting the mitochondrion; that stretch reads MLGRLRTVVK…MELRKALDLY (113 aa). The substrate site is built by S101, N103, R107, and R140. D227 provides a ligand contact to Mg(2+). NADP(+) is bound by residues 284–290 and N297; that span reads HHVAADI.

This sequence belongs to the isocitrate and isopropylmalate dehydrogenases family. In terms of assembly, heterooligomer of catalytic and regulatory subunits. The cofactor is Mg(2+). Mn(2+) is required as a cofactor.

It localises to the mitochondrion. The catalysed reaction is D-threo-isocitrate + NAD(+) = 2-oxoglutarate + CO2 + NADH. Its function is as follows. Performs an essential role in the oxidative function of the citric acid cycle. This is Isocitrate dehydrogenase [NAD] regulatory subunit B, mitochondrial (idhB) from Dictyostelium discoideum (Social amoeba).